A 233-amino-acid polypeptide reads, in one-letter code: Glutathione S-transferase U15 (233 aa).

A GST N-terminal domain is found at 5-85; sequence EEVKLLGTWY…YIDETWNSSG (81 aa). Glutathione contacts are provided by residues 15–16, 42–43, 56–57, and 69–70; these read SP, SK, KV, and VS. Residues 92–219 enclose the GST C-terminal domain; sequence HPYDRALARF…VPDIDKVAKF (128 aa). Thr158 bears the Phosphothreonine mark.

Belongs to the GST superfamily. Tau family.

It is found in the cytoplasm. Its subcellular location is the cytosol. The enzyme catalyses RX + glutathione = an S-substituted glutathione + a halide anion + H(+). Its function is as follows. May be involved in the conjugation of reduced glutathione to a wide number of exogenous and endogenous hydrophobic electrophiles and have a detoxification role against certain herbicides. This chain is Glutathione S-transferase U15 (GSTU15), found in Arabidopsis thaliana (Mouse-ear cress).